Here is a 519-residue protein sequence, read N- to C-terminus: Glucoamylase GLU1 (519 aa).

Positions 1–27 are cleaved as a signal peptide; that stretch reads MKFGVLFSVFAAIVSALPLQEGPLNKR. 2 N-linked (GlcNAc...) asparagine glycosylation sites follow: asparagine 115 and asparagine 127. Residue tryptophan 166 participates in substrate binding. The N-linked (GlcNAc...) asparagine glycan is linked to asparagine 205. The active-site Proton acceptor is the aspartate 234. Catalysis depends on glutamate 237, which acts as the Proton donor.

The protein belongs to the glycosyl hydrolase 15 family.

The catalysed reaction is Hydrolysis of terminal (1-&gt;4)-linked alpha-D-glucose residues successively from non-reducing ends of the chains with release of beta-D-glucose.. In Saccharomycopsis fibuligera (Yeast), this protein is Glucoamylase GLU1 (GLU1).